The sequence spans 165 residues: Myosin regulatory light chain 2, ventricular/cardiac muscle isoform (165 aa).

N,N,N-trimethylserine is present on Ser-2. Asn-14 carries the post-translational modification Deamidated asparagine. 2 positions are modified to phosphoserine: Ser-15 and Ser-19. EF-hand domains are found at residues 24 to 59 (TQIQ…LGRV), 94 to 129 (DPEE…QAER), and 130 to 165 (FSKD…GEEK). Residues Asp-37, Asn-39, Asp-41, and Asp-48 each coordinate Ca(2+). Position 52 is a phosphothreonine (Thr-52).

Myosin is a hexamer of 2 heavy chains and 4 light chains. Interacts with MYOC. N-terminus is methylated by METTL11A/NTM1. Post-translationally, phosphorylated by MYLK3 and MYLK2; promotes cardiac muscle contraction and function. Dephosphorylated by PPP1CB complexed to PPP1R12B. The phosphorylated form in adult is expressed as gradients across the heart from endocardium (low phosphorylation) to epicardium (high phosphorylation); regulates cardiac torsion and workload distribution.

It localises to the cytoplasm. Its subcellular location is the myofibril. The protein localises to the sarcomere. The protein resides in the a band. Its function is as follows. Contractile protein that plays a role in heart development and function. Following phosphorylation, plays a role in cross-bridge cycling kinetics and cardiac muscle contraction by increasing myosin lever arm stiffness and promoting myosin head diffusion; as a consequence of the increase in maximum contraction force and calcium sensitivity of contraction force. These events altogether slow down myosin kinetics and prolong duty cycle resulting in accumulated myosins being cooperatively recruited to actin binding sites to sustain thin filament activation as a means to fine-tune myofilament calcium sensitivity to force. During cardiogenesis plays an early role in cardiac contractility by promoting cardiac myofibril assembly. In Oryctolagus cuniculus (Rabbit), this protein is Myosin regulatory light chain 2, ventricular/cardiac muscle isoform.